Here is a 98-residue protein sequence, read N- to C-terminus: Large ribosomal subunit protein uL23 (98 aa).

This sequence belongs to the universal ribosomal protein uL23 family. As to quaternary structure, part of the 50S ribosomal subunit. Contacts protein L29, and trigger factor when it is bound to the ribosome.

Functionally, one of the early assembly proteins it binds 23S rRNA. One of the proteins that surrounds the polypeptide exit tunnel on the outside of the ribosome. Forms the main docking site for trigger factor binding to the ribosome. The protein is Large ribosomal subunit protein uL23 of Parafrankia sp. (strain EAN1pec).